The following is a 456-amino-acid chain: Enolase (456 aa).

Q167 lines the (2R)-2-phosphoglycerate pocket. Residue E209 is the Proton donor of the active site. Mg(2+) contacts are provided by D250, E312, and D339. Residues K364, R393, S394, and K415 each contribute to the (2R)-2-phosphoglycerate site. K364 acts as the Proton acceptor in catalysis.

The protein belongs to the enolase family. Requires Mg(2+) as cofactor.

Its subcellular location is the cytoplasm. It localises to the secreted. The protein localises to the cell surface. It carries out the reaction (2R)-2-phosphoglycerate = phosphoenolpyruvate + H2O. It functions in the pathway carbohydrate degradation; glycolysis; pyruvate from D-glyceraldehyde 3-phosphate: step 4/5. In terms of biological role, catalyzes the reversible conversion of 2-phosphoglycerate (2-PG) into phosphoenolpyruvate (PEP). It is essential for the degradation of carbohydrates via glycolysis. The protein is Enolase of Mycoplasmopsis pulmonis (strain UAB CTIP) (Mycoplasma pulmonis).